A 234-amino-acid polypeptide reads, in one-letter code: MRLVQLSRHSIAFPSPEGALREPNGLLALGGDLSPARLLMAYQRGIFPWFSPGDPILWWSPDPRAVLWPESLHISRSMKRFHKRSPYRVTMNYAFGQVIEGCASDREEGTWITRGVVEAYHRLHELGHAHSIEVWCEDELVGGMYGVAQGTLFCGESMFSRMENASKTALLVFCEEFIGHGGKLIDCQVLNDHTASLGACEIPRRDYLNYLNQMRLGRLPNNFWVPRCLFSPQE.

Belongs to the L/F-transferase family.

Its subcellular location is the cytoplasm. It carries out the reaction N-terminal L-lysyl-[protein] + L-leucyl-tRNA(Leu) = N-terminal L-leucyl-L-lysyl-[protein] + tRNA(Leu) + H(+). The catalysed reaction is N-terminal L-arginyl-[protein] + L-leucyl-tRNA(Leu) = N-terminal L-leucyl-L-arginyl-[protein] + tRNA(Leu) + H(+). It catalyses the reaction L-phenylalanyl-tRNA(Phe) + an N-terminal L-alpha-aminoacyl-[protein] = an N-terminal L-phenylalanyl-L-alpha-aminoacyl-[protein] + tRNA(Phe). Functionally, functions in the N-end rule pathway of protein degradation where it conjugates Leu, Phe and, less efficiently, Met from aminoacyl-tRNAs to the N-termini of proteins containing an N-terminal arginine or lysine. This Escherichia coli O7:K1 (strain IAI39 / ExPEC) protein is Leucyl/phenylalanyl-tRNA--protein transferase.